The chain runs to 2752 residues: Serine/arginine repetitive matrix protein 2 (2752 aa).

M1 carries the N-acetylmethionine modification. A coiled-coil region spans residues H60–A92. Residue K101 is modified to N6-acetyllysine. Glycyl lysine isopeptide (Lys-Gly) (interchain with G-Cter in SUMO2) cross-links involve residues K108 and K130. The segment at I141–R2131 is disordered. Y145 carries the phosphotyrosine modification. Position 169 is an N6-acetyllysine (K169). A compositionally biased stretch (low complexity) spans R175 to P185. Basic residues-rich tracts occupy residues K186–G197 and R207–R249. Residues G197–R259 form a sufficient for RNA-binding region. Residues S220 and S222 each carry the phosphoserine modification. Residues S263 to A290 are compositionally biased toward low complexity. Phosphothreonine is present on T286. Residues S295, S297, S300, S322, and S323 each carry the phosphoserine modification. A compositionally biased stretch (polar residues) spans P313 to S333. The segment covering Y335–A347 has biased composition (basic and acidic residues). Residues T348–G360 are compositionally biased toward low complexity. Phosphoserine is present on residues S351, S353, S357, and S358. Phosphothreonine occurs at positions 359 and 367. A Phosphoserine modification is found at S377. Polar residues predominate over residues P380 to S398. Phosphothreonine occurs at positions 383 and 384. Phosphoserine is present on residues S387, S395, S398, S404, and S408. Basic and acidic residues predominate over residues P399–E410. Low complexity predominate over residues K411–S421. 6 positions are modified to phosphoserine: S424, S435, S436, S437, S440, and S454. Basic residues predominate over residues N461–R483. Phosphoserine is present on residues S484, S486, S506, S508, S510, S534, S536, and S543. The segment covering K491–S536 has biased composition (basic residues). Over residues P537–R546 the composition is skewed to low complexity. 3 stretches are compositionally biased toward basic residues: residues N547–S564, G571–R723, and N732–R742. Residues S702, S704, and S706 each carry the phosphoserine modification. A phosphoserine mark is found at S778, S780, and S783. Positions S790 to K805 are enriched in low complexity. Over residues A806–R816 the composition is skewed to basic residues. The segment covering K828–H841 has biased composition (low complexity). Residues S846 and S854 each carry the phosphoserine modification. A compositionally biased stretch (polar residues) spans P849–R869. At T856 the chain carries Phosphothreonine. Residues S857 and S864 each carry the phosphoserine modification. T866 bears the Phosphothreonine mark. Residues S871, S875, S876, S908, S935, S950, S952, S954, S957, S968, S970, S972, S973, and S974 each carry the phosphoserine modification. Composition is skewed to low complexity over residues S901–P917 and S924–T945. Phosphothreonine occurs at positions 977 and 983. A phosphoserine mark is found at S992 and S994. Phosphotyrosine is present on Y996. A Phosphothreonine modification is found at T1003. The span at S1008–P1017 shows a compositional bias: low complexity. A phosphoserine mark is found at S1010, S1014, S1024, S1028, S1032, and S1042. Residues K1040–S1064 show a composition bias toward polar residues. A Phosphothreonine modification is found at T1043. Y1049 bears the Phosphotyrosine mark. 9 positions are modified to phosphoserine: S1064, S1069, S1072, S1073, S1083, S1099, S1101, S1102, and S1103. Polar residues predominate over residues T1071–T1092. Low complexity predominate over residues S1093–P1104. T1106 carries the post-translational modification Phosphothreonine. Phosphoserine is present on residues S1112, S1122, S1124, S1129, S1132, S1152, S1179, S1188, and S1198. Residues S1132–L1159 show a composition bias toward polar residues. A compositionally biased stretch (basic and acidic residues) spans D1204–S1214. At T1208 the chain carries Phosphothreonine. 9 positions are modified to phosphoserine: S1214, S1219, S1227, S1254, S1257, S1258, S1266, S1270, and S1271. Polar residues predominate over residues A1216–S1233. Residues T1283–S1292 are compositionally biased toward polar residues. Residues S1311, S1318, S1320, S1326, S1329, S1336, S1348, S1368, S1382, S1383, S1384, S1387, S1401, S1403, and S1404 each carry the phosphoserine modification. The segment covering S1318–G1328 has biased composition (polar residues). Polar residues predominate over residues T1376–L1386. The residue at position 1413 (T1413) is a Phosphothreonine. S1415, S1421, S1423, and S1424 each carry phosphoserine. Residue T1434 is modified to Phosphothreonine. Residues S1441–G1452 are compositionally biased toward low complexity. S1444 and S1451 each carry phosphoserine. Phosphothreonine is present on T1453. A compositionally biased stretch (polar residues) spans T1453–S1463. Phosphoserine occurs at positions 1458, 1460, 1462, and 1463. T1472 carries the post-translational modification Phosphothreonine. Residues S1482 and S1483 each carry the phosphoserine modification. T1492 is subject to Phosphothreonine. 4 positions are modified to phosphoserine: S1497, S1499, S1501, and S1502. A Phosphothreonine modification is found at T1511. Phosphoserine occurs at positions 1517, 1519, 1521, and 1522. At T1531 the chain carries Phosphothreonine. Residues G1534 to E1544 are compositionally biased toward polar residues. S1537, S1539, S1541, S1542, and S1552 each carry phosphoserine. A compositionally biased stretch (basic and acidic residues) spans E1555 to A1567. Positions K1568 to S1577 are enriched in basic residues. Phosphoserine occurs at positions 1577, 1579, 1581, 1582, 1598, 1600, 1601, 1616, 1620, 1621, 1648, 1658, 1691, 1693, and 1694. Residues S1638–S1657 show a composition bias toward low complexity. Residues K1681–S1691 are compositionally biased toward basic residues. T1698 carries the phosphothreonine modification. 6 positions are modified to phosphoserine: S1727, S1729, S1731, S1732, S1762, and S1764. Composition is skewed to basic residues over residues G1769–D1789 and S1798–G1816. A phosphoserine mark is found at S1818, S1822, S1854, S1857, S1876, and S1878. A compositionally biased stretch (basic residues) spans S1834–S1854. Basic residues predominate over residues K1862–L2068. T1880 carries the post-translational modification Phosphothreonine. Phosphoserine is present on residues S1884 and S1890. Residue T1892 is modified to Phosphothreonine. Phosphoserine occurs at positions 1893, 1916, 1919, 1923, and 1925. Phosphothreonine is present on residues T1927 and T1931. 2 positions are modified to phosphoserine: S1946 and S1948. Residues T1950 and T1954 each carry the phosphothreonine modification. Phosphoserine occurs at positions 1958 and 1960. A phosphothreonine mark is found at T1962 and T1966. S1970, S1972, and S1975 each carry phosphoserine. T1978 carries the phosphothreonine modification. A phosphoserine mark is found at S1984, S1987, S1996, S1999, S2008, S2011, S2018, and S2020. Phosphothreonine is present on T2022. S2030 and S2032 each carry phosphoserine. T2034 bears the Phosphothreonine mark. 4 positions are modified to phosphoserine: S2042, S2044, S2046, and S2067. T2069 is subject to Phosphothreonine. Residues R2070–A2095 show a composition bias toward low complexity. Phosphoserine is present on residues S2071 and S2090. Residue T2092 is modified to Phosphothreonine. A compositionally biased stretch (polar residues) spans R2097–P2124. A phosphoserine mark is found at S2100 and S2102. T2104 carries the phosphothreonine modification. A phosphoserine mark is found at S2118, S2121, S2123, and S2132. A Phosphothreonine modification is found at T2144. R2194, R2207, R2231, and R2246 each carry omega-N-methylarginine. S2272 bears the Phosphoserine mark. Residues R2274 and R2288 each carry the omega-N-methylarginine modification. Residues T2289, T2291, and T2302 each carry the phosphothreonine modification. The residue at position 2310 (S2310) is a Phosphoserine. Residues L2311–R2342 form a disordered region. Phosphothreonine occurs at positions 2316 and 2329. Residues P2317–A2334 show a composition bias toward polar residues. S2335 is modified (phosphoserine). An Omega-N-methylarginine modification is found at R2342. Phosphoserine is present on residues S2343, S2368, and S2376. T2381 carries the post-translational modification Phosphothreonine. S2382 carries the phosphoserine modification. R2384 bears the Asymmetric dimethylarginine; alternate mark. Residue R2384 is modified to Omega-N-methylarginine; alternate. A disordered region spans residues A2389–P2752. Residues S2394, S2398, and S2407 each carry the phosphoserine modification. A Phosphothreonine modification is found at T2409. 6 positions are modified to phosphoserine: S2412, S2415, S2426, S2429, S2449, and S2453. Polar residues predominate over residues S2426–L2439. Residues F2455 to Q2473 show a composition bias toward polar residues. Low complexity-rich tracts occupy residues S2474–A2487, A2515–P2526, and S2533–S2567. S2581 is subject to Phosphoserine. Phosphothreonine is present on T2583. K2587 participates in a covalent cross-link: Glycyl lysine isopeptide (Lys-Gly) (interchain with G-Cter in SUMO2). T2599 carries the post-translational modification Phosphothreonine. A compositionally biased stretch (low complexity) spans S2608–S2648. Over residues P2651–P2668 the composition is skewed to pro residues. Phosphoserine occurs at positions 2664, 2675, 2677, 2684, 2688, 2690, 2692, 2694, 2702, and 2706. Over residues P2669–R2689 the composition is skewed to basic and acidic residues. Over residues P2707–E2716 the composition is skewed to low complexity. The span at R2717–S2729 shows a compositional bias: basic and acidic residues. T2738 is modified (phosphothreonine). At S2740 the chain carries Phosphoserine. Residues P2743–P2752 show a composition bias toward basic residues.

It belongs to the CWC21 family. As to quaternary structure, component of pre-catalytic, catalytic and post-catalytic spliceosome complexes. Found in a pre-mRNA splicing complex with SFRS4, SFRS5, SNRP70, SNRPA1, SRRM1 and SRRM2. Component of the minor spliceosome, which splices U12-type introns. Interacts with DHX8. Interacts with CACTIN. In terms of tissue distribution, expressed in liver, placenta, and white blood cells.

It localises to the nucleus. The protein resides in the nucleus speckle. Its function is as follows. Required for pre-mRNA splicing as component of the spliceosome. As a component of the minor spliceosome, involved in the splicing of U12-type introns in pre-mRNAs. This Homo sapiens (Human) protein is Serine/arginine repetitive matrix protein 2 (SRRM2).